The following is a 493-amino-acid chain: Glutamate--tRNA ligase (493 aa).

Positions 9 to 19 match the 'HIGH' region motif; sequence PSPTGFVHIGS. Positions 258–262 match the 'KMSKS' region motif; sequence KLSKR. An ATP-binding site is contributed by K261.

It belongs to the class-I aminoacyl-tRNA synthetase family. Glutamate--tRNA ligase type 1 subfamily. As to quaternary structure, monomer.

The protein resides in the cytoplasm. It carries out the reaction tRNA(Glu) + L-glutamate + ATP = L-glutamyl-tRNA(Glu) + AMP + diphosphate. Functionally, catalyzes the attachment of glutamate to tRNA(Glu) in a two-step reaction: glutamate is first activated by ATP to form Glu-AMP and then transferred to the acceptor end of tRNA(Glu). The sequence is that of Glutamate--tRNA ligase from Clostridioides difficile (strain 630) (Peptoclostridium difficile).